The sequence spans 591 residues: Polyphenol oxidase D, chloroplastic (591 aa).

Residues 1–83 constitute a chloroplast transit peptide; the sequence is MASLCSNSST…ANAIPLAASA (83 aa). Cystine bridges form between C94-C110 and C109-C177. The Cu cation site is built by H176, H194, H203, H324, H328, and H366. Positions 180–194 form a cross-link, 2'-(S-cysteinyl)-histidine (Cys-His); that stretch reads CNGAYRIGGKELQVH.

The protein belongs to the tyrosinase family. It depends on Cu(2+) as a cofactor.

The protein localises to the plastid. It localises to the chloroplast thylakoid lumen. The catalysed reaction is 2 catechol + O2 = 2 1,2-benzoquinone + 2 H2O. Catalyzes the oxidation of mono- and o-diphenols to o-diquinones. This Solanum lycopersicum (Tomato) protein is Polyphenol oxidase D, chloroplastic.